Reading from the N-terminus, the 377-residue chain is Adenosine 3'-phospho 5'-phosphosulfate transporter 2 (377 aa).

10 helical membrane passes run 50-70, 77-97, 115-135, 138-158, 164-184, 195-215, 228-248, 266-286, 293-313, and 317-337; these read LCCGGVFALYLVYGYMQELIF, PYGWYLTLVQFAYYTAFGYIE, ALLAFLTLGTMGLSNSSVGYL, PTQVIFKCCKLIPVLIGSVLI, GPMDFFAATAMCLGLILFTLA, FGVFLISLALLCDAAIGNVQE, VVIYSYGIGFVYLAVIMLLSG, GYAFLFSLTGYLGIQIVLTLV, LAATVTTARKAVTIALSFVFF, and FTIQYLWSGLIVVFGIYLNVY.

Belongs to the nucleotide-sugar transporter family. SLC35B subfamily.

It is found in the golgi apparatus membrane. Its function is as follows. Mediates the transport of adenosine 3'-phospho 5'-phosphosulfate (PAPS), from cytosol into Golgi. PAPS is a universal sulfuryl donor for sulfation events that take place in the Golgi. Essential for viability. Involved in glycosaminoglycan synthesis and the subsequent signaling. May be involved in hh and dpp signaling by controlling the sulfation of heparan sulfate (HS). The sequence is that of Adenosine 3'-phospho 5'-phosphosulfate transporter 2 from Anopheles gambiae (African malaria mosquito).